The sequence spans 262 residues: MVSIPLILGAIILLGTRKAATAALPPRPCAFAVTAATDDTCQSLGAQWGIGMAQFLKWNPGVNCNALVAGKTYCLSAGDSELGPTASLTPSPQVPTTSRATQTMTSKASTGTLVSRSGPIKFLNGMAPDCLFYHPVSPGDTCQSIVDRYKAFTLDQFYTWNPSVGKNCESLWLGYYVCTGVKGGPNSPSQQPPSQQPPSQQSPSQQSPSQQSPSQQPPSQQPPSQQPPSQQSNTSQQTQPNVNSKCKFHIFCLGTLAYMAFD.

The first 22 residues, 1–22 (MVSIPLILGAIILLGTRKAATA), serve as a signal peptide directing secretion. The LysM 1 domain occupies 31 to 75 (FAVTAATDDTCQSLGAQWGIGMAQFLKWNPGVNCNALVAGKTYCL). A disordered region spans residues 85-112 (TASLTPSPQVPTTSRATQTMTSKASTGT). Residues 86-112 (ASLTPSPQVPTTSRATQTMTSKASTGT) are compositionally biased toward polar residues. The region spanning 132 to 179 (FYHPVSPGDTCQSIVDRYKAFTLDQFYTWNPSVGKNCESLWLGYYVCT) is the LysM 2 domain. Residues 184 to 240 (GPNSPSQQPPSQQPPSQQSPSQQSPSQQSPSQQPPSQQPPSQQPPSQQSNTSQQTQP) form a disordered region. The span at 197-214 (PPSQQSPSQQSPSQQSPS) shows a compositional bias: low complexity. Residues 215 to 226 (QQPPSQQPPSQQ) are compositionally biased toward pro residues. Low complexity predominate over residues 227-240 (PPSQQSNTSQQTQP). An N-linked (GlcNAc...) asparagine glycan is attached at Asn-233.

The protein localises to the secreted. In terms of biological role, might have a role in sequestration of chitin oligosaccharides (breakdown products of fungal cell walls that are released during invasion and act as triggers of host immunity) to dampen host defense. The protein is LysM domain-containing protein ARB_03438 of Arthroderma benhamiae (strain ATCC MYA-4681 / CBS 112371) (Trichophyton mentagrophytes).